The sequence spans 202 residues: 3-isopropylmalate dehydratase small subunit 1 (202 aa).

This sequence belongs to the LeuD family. LeuD type 1 subfamily. Heterodimer of LeuC and LeuD.

It carries out the reaction (2R,3S)-3-isopropylmalate = (2S)-2-isopropylmalate. Its pathway is amino-acid biosynthesis; L-leucine biosynthesis; L-leucine from 3-methyl-2-oxobutanoate: step 2/4. Catalyzes the isomerization between 2-isopropylmalate and 3-isopropylmalate, via the formation of 2-isopropylmaleate. This chain is 3-isopropylmalate dehydratase small subunit 1, found in Bordetella pertussis (strain Tohama I / ATCC BAA-589 / NCTC 13251).